The primary structure comprises 638 residues: Phosphomethylpyrimidine synthase (638 aa).

Substrate contacts are provided by residues Asn243, Met272, Tyr301, His337, 357-359 (SRG), 398-401 (DGLR), and Glu437. His441 is a Zn(2+) binding site. A substrate-binding site is contributed by Tyr464. Residue His505 participates in Zn(2+) binding. Residues Cys585, Cys588, and Cys593 each coordinate [4Fe-4S] cluster.

Belongs to the ThiC family. Homodimer. Requires [4Fe-4S] cluster as cofactor.

It catalyses the reaction 5-amino-1-(5-phospho-beta-D-ribosyl)imidazole + S-adenosyl-L-methionine = 4-amino-2-methyl-5-(phosphooxymethyl)pyrimidine + CO + 5'-deoxyadenosine + formate + L-methionine + 3 H(+). It participates in cofactor biosynthesis; thiamine diphosphate biosynthesis. Functionally, catalyzes the synthesis of the hydroxymethylpyrimidine phosphate (HMP-P) moiety of thiamine from aminoimidazole ribotide (AIR) in a radical S-adenosyl-L-methionine (SAM)-dependent reaction. This is Phosphomethylpyrimidine synthase from Dechloromonas aromatica (strain RCB).